A 208-amino-acid polypeptide reads, in one-letter code: Small ribosomal subunit protein uS4 (208 aa).

Positions 30–51 are disordered; the sequence is KSSLEKRPYAPGQHGQRRSKIS. An S4 RNA-binding domain is found at 98-161; sequence RRLDNVVYRM…KNNPQVQRSI (64 aa).

Belongs to the universal ribosomal protein uS4 family. Part of the 30S ribosomal subunit. Contacts protein S5. The interaction surface between S4 and S5 is involved in control of translational fidelity.

Its function is as follows. One of the primary rRNA binding proteins, it binds directly to 16S rRNA where it nucleates assembly of the body of the 30S subunit. Functionally, with S5 and S12 plays an important role in translational accuracy. The protein is Small ribosomal subunit protein uS4 of Wolinella succinogenes (strain ATCC 29543 / DSM 1740 / CCUG 13145 / JCM 31913 / LMG 7466 / NCTC 11488 / FDC 602W) (Vibrio succinogenes).